We begin with the raw amino-acid sequence, 396 residues long: Proteasome-activating nucleotidase (396 aa).

Positions 16 to 57 (VTYLKRRIRQLELQVRMLEADKERLERELSRLRSEMSRLRQP) form a coiled coil. Residues 181-186 (GCGKTL) and His320 contribute to the ATP site. Residues 394–396 (IYG) are docks into pockets in the proteasome alpha-ring to cause gate opening.

The protein belongs to the AAA ATPase family. As to quaternary structure, homohexamer. The hexameric complex has a two-ring architecture resembling a top hat that caps the 20S proteasome core at one or both ends. Upon ATP-binding, the C-terminus of PAN interacts with the alpha-rings of the proteasome core by binding to the intersubunit pockets.

It localises to the cytoplasm. Functionally, ATPase which is responsible for recognizing, binding, unfolding and translocation of substrate proteins into the archaeal 20S proteasome core particle. Is essential for opening the gate of the 20S proteasome via an interaction with its C-terminus, thereby allowing substrate entry and access to the site of proteolysis. Thus, the C-termini of the proteasomal ATPase function like a 'key in a lock' to induce gate opening and therefore regulate proteolysis. Unfolding activity requires energy from ATP hydrolysis, whereas ATP binding alone promotes ATPase-20S proteasome association which triggers gate opening, and supports translocation of unfolded substrates. This chain is Proteasome-activating nucleotidase, found in Pyrococcus furiosus (strain ATCC 43587 / DSM 3638 / JCM 8422 / Vc1).